The primary structure comprises 119 residues: Acidic phospholipase A2 DE-II (119 aa).

Intrachain disulfides connect Cys11/Cys72, Cys26/Cys118, Cys28/Cys44, Cys43/Cys99, Cys50/Cys92, Cys60/Cys85, and Cys79/Cys90. The Ca(2+) site is built by Tyr27, Gly29, and Gly31. His47 is an active-site residue. Asp48 contacts Ca(2+). Asp93 is a catalytic residue.

Belongs to the phospholipase A2 family. Group I subfamily. D49 sub-subfamily. The cofactor is Ca(2+). Expressed by the venom gland.

Its subcellular location is the secreted. It carries out the reaction a 1,2-diacyl-sn-glycero-3-phosphocholine + H2O = a 1-acyl-sn-glycero-3-phosphocholine + a fatty acid + H(+). PLA2 catalyzes the calcium-dependent hydrolysis of the 2-acyl groups in 3-sn-phosphoglycerides. In Naja melanoleuca (Forest cobra), this protein is Acidic phospholipase A2 DE-II.